Here is a 195-residue protein sequence, read N- to C-terminus: dCTP deaminase (195 aa).

Residues 109–114, Asp-127, 135–137, Tyr-170, Lys-177, and Gln-181 each bind dCTP; these read RSSLAR and TLE. The active-site Proton donor/acceptor is Glu-137.

It belongs to the dCTP deaminase family. As to quaternary structure, homotrimer.

It carries out the reaction dCTP + H2O + H(+) = dUTP + NH4(+). It participates in pyrimidine metabolism; dUMP biosynthesis; dUMP from dCTP (dUTP route): step 1/2. In terms of biological role, catalyzes the deamination of dCTP to dUTP. The protein is dCTP deaminase of Rhodospirillum rubrum (strain ATCC 11170 / ATH 1.1.1 / DSM 467 / LMG 4362 / NCIMB 8255 / S1).